Consider the following 129-residue polypeptide: Lysozyme C, milk isozyme (129 aa).

In terms of domain architecture, C-type lysozyme spans 1–129; it reads KVFSKCELAH…LSEYLASCNL (129 aa). 4 disulfide bridges follow: cysteine 6/cysteine 127, cysteine 30/cysteine 115, cysteine 65/cysteine 80, and cysteine 76/cysteine 94. Residues glutamate 35 and aspartate 53 contribute to the active site. Lysine 82, aspartate 85, asparagine 87, aspartate 90, and aspartate 91 together coordinate Ca(2+).

It belongs to the glycosyl hydrolase 22 family. As to quaternary structure, monomer. It depends on Ca(2+) as a cofactor.

It catalyses the reaction Hydrolysis of (1-&gt;4)-beta-linkages between N-acetylmuramic acid and N-acetyl-D-glucosamine residues in a peptidoglycan and between N-acetyl-D-glucosamine residues in chitodextrins.. Its function is as follows. Lysozymes have primarily a bacteriolytic function; those in tissues and body fluids are associated with the monocyte-macrophage system and enhance the activity of immunoagents. The chain is Lysozyme C, milk isozyme (LYZ) from Equus caballus (Horse).